The sequence spans 24 residues: Snake venom metalloproteinase Batx-1 (24 aa).

In terms of domain architecture, Peptidase M12B spans 1-24; sequence YIELAVVADHGIFTKYNSNLNTIR. Glutamate 3 serves as a coordination point for Ca(2+).

This sequence belongs to the venom metalloproteinase (M12B) family. P-I subfamily. Monomer. Requires Zn(2+) as cofactor. The N-terminus is blocked. Post-translationally, contains 3 disulfide bonds. As to expression, expressed by the venom gland.

It is found in the secreted. With respect to regulation, inhibited by EDTA, and o-phenanthroline, but not inhibited by PMSF, pepstatin A, and aprotinin. Zinc metalloproteinase that exhits a weak hemorrhagic activity. Degrades preferentially the Aalpha- (FGA) and Bbeta-chains (FGB) of fibrinogen, and partially degrades gamma-chain (FGG) at higher concentration. Induces a mild myotoxicity, but lacks coagulant activity on human plasma or bovin fibrinogen and defibrinating activity. The sequence is that of Snake venom metalloproteinase Batx-1 from Bothrops atrox (Barba amarilla).